A 174-amino-acid polypeptide reads, in one-letter code: Crossover junction endodeoxyribonuclease RuvC (174 aa).

Residues aspartate 8, glutamate 69, and aspartate 141 contribute to the active site. The Mg(2+) site is built by aspartate 8, glutamate 69, and aspartate 141.

It belongs to the RuvC family. In terms of assembly, homodimer which binds Holliday junction (HJ) DNA. The HJ becomes 2-fold symmetrical on binding to RuvC with unstacked arms; it has a different conformation from HJ DNA in complex with RuvA. In the full resolvosome a probable DNA-RuvA(4)-RuvB(12)-RuvC(2) complex forms which resolves the HJ. Mg(2+) is required as a cofactor.

Its subcellular location is the cytoplasm. The catalysed reaction is Endonucleolytic cleavage at a junction such as a reciprocal single-stranded crossover between two homologous DNA duplexes (Holliday junction).. Functionally, the RuvA-RuvB-RuvC complex processes Holliday junction (HJ) DNA during genetic recombination and DNA repair. Endonuclease that resolves HJ intermediates. Cleaves cruciform DNA by making single-stranded nicks across the HJ at symmetrical positions within the homologous arms, yielding a 5'-phosphate and a 3'-hydroxyl group; requires a central core of homology in the junction. The consensus cleavage sequence is 5'-(A/T)TT(C/G)-3'. Cleavage occurs on the 3'-side of the TT dinucleotide at the point of strand exchange. HJ branch migration catalyzed by RuvA-RuvB allows RuvC to scan DNA until it finds its consensus sequence, where it cleaves and resolves the cruciform DNA. This chain is Crossover junction endodeoxyribonuclease RuvC, found in Xanthomonas campestris pv. campestris (strain 8004).